Reading from the N-terminus, the 238-residue chain is MEHMFPENQIENLFVGWIKKHIRNGNLTLFEEFFKTDPWIVNRCDKNGSSVFMWICIYGRIDFLKFLFKQESYPGEIINPHRRDKDGNSALHYLAEKKNHLILEEVLGYFGKNGTRICLPNFNGITPVMKAAMRGRSLNMLSLIKFGADPTQKDYHRGFTAWDWAVFTGNMELVKSLNHDYQKPLYMHFPLYKLDVFHRWFKKKPKIIITGCKNNVYEKLPEQNPNFLCVKKLNKYGK.

4 ANK repeats span residues 47 to 76, 86 to 119, 123 to 152, and 157 to 186; these read NGSS…YPGE, DGNS…RICL, NGIT…DPTQ, and RGFT…KPLY. The short motif at 80 to 86 is the Nuclear localization signal element; sequence PHRRDKD. The Nuclear localization signal signature appears at 202 to 213; it reads KKKPKIIITGCK. The PxIxITxC motif; Interaction with host PPP3CA motif lies at 205–212; the sequence is PKIIITGC. Positions 227–230 match the FLCV motif motif; it reads FLCV.

Belongs to the asfivirus A238L family. As to quaternary structure, interacts with host PPIA. Interacts with host PPP3CA/Calcineurin. Interacts with host RELA/p65; interaction of the 32 kDa form with host RELA results in the formation of a stable complex with NF-kappa-B. Interacts with host PPP3R1. Interacts with host EP300; this interaction inhibits the association of host EP300 with host RELA, JUN and NFATC2. In terms of processing, the protein exists in a 28 kDa and a 32 kDa form, probably due to post-translational modifications which are neither phosphorylation, nor sumoylation.

The protein resides in the host nucleus. The protein localises to the host cytoplasm. Its function is as follows. IkB-like protein that inhibits the binding of NF-kappa-B to DNA, thereby downregulating pro-inflammatory cytokine production. Forms a heterodimer with the NF-kappa-B subunit RELA/p65 and prevents the activation of the NF-kappa-B transcription factor. Inhibits calcineurin function, which is required for the induction of nuclear factor of activated T cells (NFAT)-dependent immune response genes. Prevents the binding of substrates to calcineurin without affecting the phosphatase activity. Does not contain the serine residues that are phosphorylated by host IkB kinase and thus is not degraded following stimulation of the NFkB pathway. This chain is IkB-like protein (A238L), found in African swine fever virus (isolate Warthog/Namibia/Wart80/1980) (ASFV).